Consider the following 382-residue polypeptide: L-arabinitol 4-dehydrogenase (382 aa).

8 residues coordinate Zn(2+): cysteine 55, histidine 80, glutamate 81, cysteine 110, cysteine 113, cysteine 116, cysteine 124, and glutamate 165. Residues 192–193 (PI), aspartate 213, arginine 218, isoleucine 293, and 317–319 (QYR) contribute to the NAD(+) site.

It belongs to the zinc-containing alcohol dehydrogenase family. In terms of assembly, homotetramer. Zn(2+) serves as cofactor.

It carries out the reaction L-arabinitol + NAD(+) = L-xylulose + NADH + H(+). Its pathway is carbohydrate degradation; L-arabinose degradation via L-arabinitol; D-xylulose 5-phosphate from L-arabinose (fungal route): step 2/5. Its function is as follows. Catalyzes the NAD-dependent oxidation of L-arabinitol to L-xylulose in the fungal L-arabinose catabolic pathway. L-arabinose catabolism is important for using plant material as a carbon source. Also active on ribitol and xylitol. Not active with NADP as cosubstrate. The polypeptide is L-arabinitol 4-dehydrogenase (ladA) (Aspergillus oryzae (Yellow koji mold)).